The following is a 311-amino-acid chain: Methionyl-tRNA formyltransferase (311 aa).

Residue 110 to 113 coordinates (6S)-5,6,7,8-tetrahydrofolate; the sequence is SLLP.

The protein belongs to the Fmt family.

The catalysed reaction is L-methionyl-tRNA(fMet) + (6R)-10-formyltetrahydrofolate = N-formyl-L-methionyl-tRNA(fMet) + (6S)-5,6,7,8-tetrahydrofolate + H(+). Attaches a formyl group to the free amino group of methionyl-tRNA(fMet). The formyl group appears to play a dual role in the initiator identity of N-formylmethionyl-tRNA by promoting its recognition by IF2 and preventing the misappropriation of this tRNA by the elongation apparatus. This chain is Methionyl-tRNA formyltransferase, found in Streptococcus sanguinis (strain SK36).